A 522-amino-acid chain; its full sequence is N-acetylgalactosamine-6-sulfatase (522 aa).

A signal peptide spans 1–25 (MAPVAAATGWRLLLVLSAAGLGAAG). Residues 27 to 379 (PQPPNILLLL…PAMLGGQLTD (353 aa)) form a catalytic domain region. Asp38, Asp39, and Cys78 together coordinate Ca(2+). The active-site Nucleophile is Cys78. Cys78 is subject to 3-oxoalanine (Cys). His141 is a catalytic residue. Asn203 carries N-linked (GlcNAc...) asparagine glycosylation. Ca(2+) contacts are provided by Asp288 and Asn289. Cys308 and Cys419 form a disulfide bridge. An N-linked (GlcNAc...) asparagine glycan is attached at Asn423. 2 cysteine pairs are disulfide-bonded: Cys489-Cys518 and Cys501-Cys507.

This sequence belongs to the sulfatase family. As to quaternary structure, homodimer. It depends on Ca(2+) as a cofactor. Post-translationally, the conversion to 3-oxoalanine (also known as C-formylglycine, FGly), of a serine or cysteine residue in prokaryotes and of a cysteine residue in eukaryotes, is critical for catalytic activity.

Its subcellular location is the lysosome. It carries out the reaction Hydrolysis of the 6-sulfate groups of the N-acetyl-D-galactosamine 6-sulfate units of chondroitin sulfate and of the D-galactose 6-sulfate units of keratan sulfate.. This Canis lupus familiaris (Dog) protein is N-acetylgalactosamine-6-sulfatase (GALNS).